We begin with the raw amino-acid sequence, 77 residues long: U8-lycotoxin-Ls1t (77 aa).

Residues Met1–Ala20 form the signal peptide. A propeptide spanning residues Gln21 to Lys26 is cleaved from the precursor.

It belongs to the neurotoxin 19 (CSTX) family. 08 (U8-Lctx) subfamily. In terms of processing, contains 4 disulfide bonds. In terms of tissue distribution, expressed by the venom gland.

It localises to the secreted. This Lycosa singoriensis (Wolf spider) protein is U8-lycotoxin-Ls1t.